A 145-amino-acid chain; its full sequence is Ribosome-binding factor A (145 aa).

A compositionally biased stretch (basic residues) spans 1 to 10; the sequence is MKRPSSHGRR. 2 disordered regions span residues 1 to 21 and 124 to 145; these read MKRPSSHGRRPPQGPSQRQLR and DDPKVRQDLTPQPPSDSWKDED.

It belongs to the RbfA family. As to quaternary structure, monomer. Binds 30S ribosomal subunits, but not 50S ribosomal subunits or 70S ribosomes.

It localises to the cytoplasm. Functionally, one of several proteins that assist in the late maturation steps of the functional core of the 30S ribosomal subunit. Associates with free 30S ribosomal subunits (but not with 30S subunits that are part of 70S ribosomes or polysomes). Required for efficient processing of 16S rRNA. May interact with the 5'-terminal helix region of 16S rRNA. This chain is Ribosome-binding factor A, found in Phenylobacterium zucineum (strain HLK1).